The primary structure comprises 110 residues: Spermatid nuclear transition protein 3 (110 aa).

The segment at 80–110 (RSCAREKLNQSRKRYQNMRQSQRRGQNQKRR) is disordered.

The protein localises to the nucleus. The protein resides in the chromosome. Involved in nuclear basic protein transition: histones are replaced by spermatid specific proteins which are themselves replaced by protamines in late spermatids. This chain is Spermatid nuclear transition protein 3, found in Ovis aries (Sheep).